The sequence spans 80 residues: MSFEVFEKLEAKVQQAIDTITLLQMEIEELKEKNRSLSQEIQNATSGRESLAHENEQLKQEQQVWQERLRALLGKMEDVQ.

Residues 3–80 (FEVFEKLEAK…ALLGKMEDVQ (78 aa)) are a coiled coil.

This sequence belongs to the ZapB family. Homodimer. The ends of the coiled-coil dimer bind to each other, forming polymers. Interacts with FtsZ.

It is found in the cytoplasm. In terms of biological role, non-essential, abundant cell division factor that is required for proper Z-ring formation. It is recruited early to the divisome by direct interaction with FtsZ, stimulating Z-ring assembly and thereby promoting cell division earlier in the cell cycle. Its recruitment to the Z-ring requires functional FtsA or ZipA. This chain is Cell division protein ZapB, found in Photorhabdus laumondii subsp. laumondii (strain DSM 15139 / CIP 105565 / TT01) (Photorhabdus luminescens subsp. laumondii).